A 276-amino-acid polypeptide reads, in one-letter code: Undecaprenyl-diphosphatase 1 (276 aa).

A run of 7 helical transmembrane segments spans residues 4–24, 45–62, 83–103, 108–128, 187–207, 217–237, and 252–272; these read ILIC…FLPV, KTFD…VCWE, FTLN…LFEK, VLFS…IILW, VATE…TLYE, VDSL…AFVC, and VFAW…YSGW.

It belongs to the UppP family.

It is found in the cell inner membrane. The enzyme catalyses di-trans,octa-cis-undecaprenyl diphosphate + H2O = di-trans,octa-cis-undecaprenyl phosphate + phosphate + H(+). Catalyzes the dephosphorylation of undecaprenyl diphosphate (UPP). Confers resistance to bacitracin. The sequence is that of Undecaprenyl-diphosphatase 1 from Burkholderia ambifaria (strain ATCC BAA-244 / DSM 16087 / CCUG 44356 / LMG 19182 / AMMD) (Burkholderia cepacia (strain AMMD)).